Reading from the N-terminus, the 346-residue chain is C5a anaphylatoxin chemotactic receptor 1 (346 aa).

Residues 1–33 (MDDNNSDWTSYDFGNDTIPSPNEISLSHIGTRH) lie on the Extracellular side of the membrane. 2 N-linked (GlcNAc...) asparagine glycosylation sites follow: N4 and N15. A helical membrane pass occupies residues 34 to 60 (WITLVCYGIVFLLGVPGNALVVWVTGF). The Cytoplasmic segment spans residues 61–65 (RMPNS). A helical membrane pass occupies residues 66–89 (VNAQWFLNLAIADLLCCLSLPILM). Topologically, residues 90–106 (VPLAQDQHWPFGALACK) are extracellular. C105 and C183 are joined by a disulfide. The chain crosses the membrane as a helical span at residues 107-128 (LFSGIFYMMMYCSVLLLVVISL). Over 129–149 (DRFLLVTKPVWCQNNRQPRQA) the chain is Cytoplasmic. The chain crosses the membrane as a helical span at residues 150 to 170 (RILCFIIWILGLLGSSPYFAH). At 171 to 194 (MEIQHHSETKTVCTGSYSSLGHAW) the chain is on the extracellular side. A helical membrane pass occupies residues 195–220 (AITIIRSFLFFLLPFLIICISHWKVY). Over 221-238 (HMTSSGRRQRDKSSRTLR) the chain is Cytoplasmic. The helical transmembrane segment at 239–261 (VILALVLGFFLCWTPLHIVDLLI) threads the bilayer. The Extracellular portion of the chain corresponds to 262-279 (LVSDQPSERFEVNLNLAH). A helical membrane pass occupies residues 280-300 (VLTLCLAYINSCLNPLLYVCL). The Cytoplasmic segment spans residues 301–346 (GRGFKENLISSLRSVLHFASEAPTHGPSMTTNSKSTTDGVFREKPV). Residues 323-346 (PTHGPSMTTNSKSTTDGVFREKPV) form a disordered region. The span at 327-338 (PSMTTNSKSTTD) shows a compositional bias: polar residues.

Belongs to the G-protein coupled receptor 1 family.

The protein localises to the cell membrane. Functionally, receptor for the chemotactic and inflammatory peptide anaphylatoxin C5a. This receptor stimulates chemotaxis, granule enzyme release and superoxide anion production. This is C5a anaphylatoxin chemotactic receptor 1 (c5ar1) from Danio rerio (Zebrafish).